The sequence spans 132 residues: Fumarate reductase subunit C (132 aa).

The next 3 membrane-spanning stretches (helical) occupy residues 36 to 56, 70 to 90, and 110 to 130; these read AIPT…LGSL, IVII…VTYY, and IITM…LVFM.

The protein belongs to the FrdC family. As to quaternary structure, part of an enzyme complex containing four subunits: a flavoprotein (FrdA), an iron-sulfur protein (FrdB), and two hydrophobic anchor proteins (FrdC and FrdD).

The protein resides in the cell inner membrane. Anchors the catalytic components of the fumarate reductase complex to the cell membrane, binds quinones. The sequence is that of Fumarate reductase subunit C from Pasteurella multocida (strain Pm70).